The sequence spans 425 residues: Histidine--tRNA ligase (425 aa).

It belongs to the class-II aminoacyl-tRNA synthetase family. In terms of assembly, homodimer.

The protein resides in the cytoplasm. The catalysed reaction is tRNA(His) + L-histidine + ATP = L-histidyl-tRNA(His) + AMP + diphosphate + H(+). In Aeromonas salmonicida (strain A449), this protein is Histidine--tRNA ligase.